The primary structure comprises 171 residues: uncharacterized protein (171 aa).

The PfpI endopeptidase domain maps to 3–171 (KKVAIILANE…FNREIVKQLQ (169 aa)).

Belongs to the peptidase C56 family.

This is an uncharacterized protein from Staphylococcus aureus (strain MRSA252).